The primary structure comprises 80 residues: Acyl carrier protein (80 aa).

The Carrier domain occupies 4–79 (EEIFNKIKDL…DAVSYIKSHQ (76 aa)). An O-(pantetheine 4'-phosphoryl)serine modification is found at serine 39.

Belongs to the acyl carrier protein (ACP) family. 4'-phosphopantetheine is transferred from CoA to a specific serine of apo-ACP by AcpS. This modification is essential for activity because fatty acids are bound in thioester linkage to the sulfhydryl of the prosthetic group.

The protein resides in the cytoplasm. The protein operates within lipid metabolism; fatty acid biosynthesis. Its function is as follows. Carrier of the growing fatty acid chain in fatty acid biosynthesis. The protein is Acyl carrier protein of Lactobacillus acidophilus (strain ATCC 700396 / NCK56 / N2 / NCFM).